We begin with the raw amino-acid sequence, 393 residues long: S-adenosylmethionine synthase 4 (393 aa).

E9 is a binding site for Mg(2+). Residue H15 coordinates ATP. E43 provides a ligand contact to K(+). The L-methionine site is built by E56 and Q99. Residues 167-169, 235-238, D246, 252-253, A269, K273, and K277 contribute to the ATP site; these read DGK, SGRF, and RK. Residue D246 coordinates L-methionine. L-methionine is bound at residue K277.

This sequence belongs to the AdoMet synthase family. As to quaternary structure, homotetramer. Requires Mn(2+) as cofactor. The cofactor is Mg(2+). Co(2+) is required as a cofactor. K(+) serves as cofactor. In terms of tissue distribution, detected in trichomes (at the protein level).

The protein resides in the cytoplasm. The enzyme catalyses L-methionine + ATP + H2O = S-adenosyl-L-methionine + phosphate + diphosphate. It functions in the pathway amino-acid biosynthesis; S-adenosyl-L-methionine biosynthesis; S-adenosyl-L-methionine from L-methionine: step 1/1. Catalyzes the formation of S-adenosylmethionine from methionine and ATP. The reaction comprises two steps that are both catalyzed by the same enzyme: formation of S-adenosylmethionine (AdoMet) and triphosphate, and subsequent hydrolysis of the triphosphate. This is S-adenosylmethionine synthase 4 (METK4) from Arabidopsis thaliana (Mouse-ear cress).